The chain runs to 363 residues: Spermidine/putrescine import ATP-binding protein PotA (363 aa).

One can recognise an ABC transporter domain in the interval 6–236; it reads VEFKNVIKKY…PINHFVADFI (231 aa). 38 to 45 contributes to the ATP binding site; sequence GPSGCGKT.

The protein belongs to the ABC transporter superfamily. Spermidine/putrescine importer (TC 3.A.1.11.1) family. In terms of assembly, the complex is composed of two ATP-binding proteins (PotA), two transmembrane proteins (PotB and PotC) and a solute-binding protein (PotD).

It is found in the cell membrane. It carries out the reaction ATP + H2O + polyamine-[polyamine-binding protein]Side 1 = ADP + phosphate + polyamineSide 2 + [polyamine-binding protein]Side 1.. Functionally, part of the ABC transporter complex PotABCD involved in spermidine/putrescine import. Responsible for energy coupling to the transport system. This Latilactobacillus sakei subsp. sakei (strain 23K) (Lactobacillus sakei subsp. sakei) protein is Spermidine/putrescine import ATP-binding protein PotA.